Reading from the N-terminus, the 348-residue chain is NADH-ubiquinone oxidoreductase chain 2 (348 aa).

Transmembrane regions (helical) follow at residues 2-22, 26-46, 55-75, 96-116, 149-169, 178-198, 199-219, 242-262, 276-296, and 323-343; these read SPYV…LTLF, WLMA…MMTY, AAIK…FAII, VLMT…FWVP, LNMK…GWGG, ILAY…MINP, SLAL…FLML, TAIL…GFMP, IIMA…YMRI, and INII…TPLL.

Belongs to the complex I subunit 2 family. Core subunit of respiratory chain NADH dehydrogenase (Complex I) which is composed of 45 different subunits. Interacts with TMEM242.

It is found in the mitochondrion inner membrane. The catalysed reaction is a ubiquinone + NADH + 5 H(+)(in) = a ubiquinol + NAD(+) + 4 H(+)(out). Core subunit of the mitochondrial membrane respiratory chain NADH dehydrogenase (Complex I) that is believed to belong to the minimal assembly required for catalysis. Complex I functions in the transfer of electrons from NADH to the respiratory chain. The immediate electron acceptor for the enzyme is believed to be ubiquinone. This chain is NADH-ubiquinone oxidoreductase chain 2, found in Osphranter robustus (Wallaroo).